The sequence spans 264 residues: Thiazole synthase (264 aa).

The Schiff-base intermediate with DXP role is filled by lysine 106. Residues glycine 167, 193–194, and 215–216 each bind 1-deoxy-D-xylulose 5-phosphate; these read AG and NT.

Belongs to the ThiG family. As to quaternary structure, homotetramer. Forms heterodimers with either ThiH or ThiS.

It is found in the cytoplasm. The catalysed reaction is [ThiS sulfur-carrier protein]-C-terminal-Gly-aminoethanethioate + 2-iminoacetate + 1-deoxy-D-xylulose 5-phosphate = [ThiS sulfur-carrier protein]-C-terminal Gly-Gly + 2-[(2R,5Z)-2-carboxy-4-methylthiazol-5(2H)-ylidene]ethyl phosphate + 2 H2O + H(+). The protein operates within cofactor biosynthesis; thiamine diphosphate biosynthesis. Functionally, catalyzes the rearrangement of 1-deoxy-D-xylulose 5-phosphate (DXP) to produce the thiazole phosphate moiety of thiamine. Sulfur is provided by the thiocarboxylate moiety of the carrier protein ThiS. In vitro, sulfur can be provided by H(2)S. In Xanthomonas campestris pv. campestris (strain 8004), this protein is Thiazole synthase.